Here is a 1146-residue protein sequence, read N- to C-terminus: Killer toxin subunits alpha/beta (1146 aa).

A signal peptide spans 1–17 (MNIFYIFLFLLSFVQGL). Positions 18-29 (EHTHRRGSLVKR) are excised as a propeptide. LysM domains are found at residues 205-234 (ADQS…QPIC) and 254-303 (KTYK…NLCV). Positions 316–372 (IAECGPLAPGEKYNAKCPLNACCSEFGFCGLTKDYCDKKSSTTGAPGTDGCFSNCGY) constitute a Chitin-binding type-1 domain. Cystine bridges form between cysteine 319-cysteine 338, cysteine 332-cysteine 344, cysteine 337-cysteine 351, and cysteine 366-cysteine 370. Residues 383–735 (FKKIAYWLDA…DDTEDPFDEE (353 aa)) enclose the GH18 domain. Chitin-binding positions include isoleucine 424 and 447–450 (GGWD). Glutamate 495 serves as the catalytic Proton donor. Residues tyrosine 496, 562-565 (MTYD), and tryptophan 707 each bind chitin. N-linked (GlcNAc...) asparagine glycosylation is found at asparagine 771, asparagine 858, asparagine 868, asparagine 876, and asparagine 1117.

This sequence belongs to the glycosyl hydrolase 18 family. As to quaternary structure, the killer toxin is composed of three subunits: alpha, beta and gamma. Post-translationally, RF2 is potentially split by membrane-bound basic amino acid-specific peptidase to yield the alpha and beta subunits.

The catalysed reaction is Random endo-hydrolysis of N-acetyl-beta-D-glucosaminide (1-&gt;4)-beta-linkages in chitin and chitodextrins.. In terms of biological role, the alpha subunit is a potent exochitinase. Along with the beta subunit it plays a role in the initial interaction of the toxin with sensitive cells and allow the gamma subunit (the active toxin) to gain entry into the cell. This Kluyveromyces lactis (strain ATCC 8585 / CBS 2359 / DSM 70799 / NBRC 1267 / NRRL Y-1140 / WM37) (Yeast) protein is Killer toxin subunits alpha/beta.